Here is a 359-residue protein sequence, read N- to C-terminus: Histidinol-phosphate aminotransferase (359 aa).

Residue lysine 217 is modified to N6-(pyridoxal phosphate)lysine.

It belongs to the class-II pyridoxal-phosphate-dependent aminotransferase family. Histidinol-phosphate aminotransferase subfamily. In terms of assembly, homodimer. Pyridoxal 5'-phosphate is required as a cofactor.

It carries out the reaction L-histidinol phosphate + 2-oxoglutarate = 3-(imidazol-4-yl)-2-oxopropyl phosphate + L-glutamate. The protein operates within amino-acid biosynthesis; L-histidine biosynthesis; L-histidine from 5-phospho-alpha-D-ribose 1-diphosphate: step 7/9. The polypeptide is Histidinol-phosphate aminotransferase (Roseobacter denitrificans (strain ATCC 33942 / OCh 114) (Erythrobacter sp. (strain OCh 114))).